The sequence spans 479 residues: GTPase Obg (479 aa).

An Obg domain is found at 2–159; that stretch reads PRFVDRVVIH…RDLTLELKTV (158 aa). One can recognise an OBG-type G domain in the interval 160–340; that stretch reads ADVGLVGFPS…LIFGLWQMVS (181 aa). Residues 166–173, 191–195, 212–215, 292–295, and 321–323 contribute to the GTP site; these read GFPSAGKS, FTTLV, DVPG, NKID, and STV. 2 residues coordinate Mg(2+): Ser-173 and Thr-193. Positions 358–436 constitute an OCT domain; sequence PVPVDDSGFD…IGEMTFDWEP (79 aa). The disordered stretch occupies residues 438-479; the sequence is TPAGGHVAMSGRGTDVRLERSDRVGAAERKAARRQRRERDDD. The segment covering 451 to 467 has biased composition (basic and acidic residues); sequence TDVRLERSDRVGAAERK.

It belongs to the TRAFAC class OBG-HflX-like GTPase superfamily. OBG GTPase family. In terms of assembly, monomer. Requires Mg(2+) as cofactor.

It is found in the cytoplasm. Its function is as follows. An essential GTPase which binds GTP, GDP and possibly (p)ppGpp with moderate affinity, with high nucleotide exchange rates and a fairly low GTP hydrolysis rate. Plays a role in control of the cell cycle, stress response, ribosome biogenesis and in those bacteria that undergo differentiation, in morphogenesis control. This Mycobacterium marinum (strain ATCC BAA-535 / M) protein is GTPase Obg.